Reading from the N-terminus, the 1372-residue chain is Serine protease pic autotransporter (1372 aa).

Residues 1-55 (MNKVYSLKYCPVTGGLIAVSELARRVIKKTCRRLTHILLAGIPAICLCYSQISQA) form the signal peptide. One can recognise a Peptidase S6 domain in the interval 56–301 (GIVRSDIAYQ…NVIPTDYLNQ (246 aa)). Residues His127, Asp155, and Ser258 each act as charge relay system in the active site. The 267-residue stretch at 1106–1372 (DTNGDAGAWA…AVNANFRYMF (267 aa)) folds into the Autotransporter domain.

Cleaved to release the mature protein from the outer membrane.

The protein resides in the periplasm. It is found in the secreted. The protein localises to the cell surface. Its subcellular location is the cell outer membrane. Functionally, involved in intestinal colonization, displays in vitro mucinolytic activity, serum resistance, and hemagglutination. Important to penetrate the intestinal mucus layer. This Shigella flexneri protein is Serine protease pic autotransporter (pic).